Reading from the N-terminus, the 61-residue chain is Probable tautomerase BA_5626/GBAA_5626/BAS5226 (61 aa).

The active-site Proton acceptor; via imino nitrogen is the P2.

The protein belongs to the 4-oxalocrotonate tautomerase family.

The sequence is that of Probable tautomerase BA_5626/GBAA_5626/BAS5226 from Bacillus anthracis.